The sequence spans 110 residues: RNA silencing suppressor (110 aa).

The basic stretch occupies residues arginine 50 to arginine 53. The C4-type zinc-finger motif lies at cysteine 60 to cysteine 81.

It belongs to the carlaviruses nucleic acid-binding protein family.

Its function is as follows. Suppressor of viral-induced RNA silencing. The potential mechanism of action is based on sequestering siRNAs. This is RNA silencing suppressor from Helenium virus S (HelVS).